The sequence spans 245 residues: Ribosomal RNA large subunit methyltransferase E (245 aa).

The segment at 1-25 (MTKSPIGGNRSGRKLGQKVKKGKLK) is disordered. The span at 11 to 25 (SGRKLGQKVKKGKLK) shows a compositional bias: basic residues. Glycine 81, tryptophan 83, aspartate 104, aspartate 120, and aspartate 144 together coordinate S-adenosyl-L-methionine. Lysine 184 functions as the Proton acceptor in the catalytic mechanism.

This sequence belongs to the class I-like SAM-binding methyltransferase superfamily. RNA methyltransferase RlmE family.

It localises to the cytoplasm. The catalysed reaction is uridine(2552) in 23S rRNA + S-adenosyl-L-methionine = 2'-O-methyluridine(2552) in 23S rRNA + S-adenosyl-L-homocysteine + H(+). Specifically methylates the uridine in position 2552 of 23S rRNA at the 2'-O position of the ribose in the fully assembled 50S ribosomal subunit. The protein is Ribosomal RNA large subunit methyltransferase E of Rhizobium meliloti (strain 1021) (Ensifer meliloti).